We begin with the raw amino-acid sequence, 189 residues long: Glycerol-3-phosphate acyltransferase (189 aa).

The next 5 membrane-spanning stretches (helical) occupy residues 1 to 21 (MVWLLAILAYLLGSLSFAVLL), 50 to 70 (KLAILTLLGDVGKGLLPVLVA), 72 to 92 (WLGLGVMEEAWVGIAAVIGHL), 111 to 131 (MLLGLYPPAVLLAAAAWLLTF), and 151 to 171 (LLAWQQPGALLPMTVLTGLIV).

This sequence belongs to the PlsY family. As to quaternary structure, probably interacts with PlsX.

The protein resides in the cell inner membrane. It catalyses the reaction an acyl phosphate + sn-glycerol 3-phosphate = a 1-acyl-sn-glycero-3-phosphate + phosphate. The protein operates within lipid metabolism; phospholipid metabolism. Catalyzes the transfer of an acyl group from acyl-phosphate (acyl-PO(4)) to glycerol-3-phosphate (G3P) to form lysophosphatidic acid (LPA). This enzyme utilizes acyl-phosphate as fatty acyl donor, but not acyl-CoA or acyl-ACP. This chain is Glycerol-3-phosphate acyltransferase, found in Pseudomonas aeruginosa (strain LESB58).